A 432-amino-acid chain; its full sequence is Adenylosuccinate lyase (432 aa).

N(6)-(1,2-dicarboxyethyl)-AMP-binding positions include 4–5 (RY), 67–69 (RHD), and 93–94 (TS). His-141 (proton donor/acceptor) is an active-site residue. Gln-212 provides a ligand contact to N(6)-(1,2-dicarboxyethyl)-AMP. The active-site Proton donor/acceptor is the Ser-262. Residues Ser-263, 268–270 (KRN), Asn-276, and 307–311 (SAERI) contribute to the N(6)-(1,2-dicarboxyethyl)-AMP site.

The protein belongs to the lyase 1 family. Adenylosuccinate lyase subfamily. As to quaternary structure, homodimer and homotetramer. Residues from neighboring subunits contribute catalytic and substrate-binding residues to each active site.

The enzyme catalyses N(6)-(1,2-dicarboxyethyl)-AMP = fumarate + AMP. It carries out the reaction (2S)-2-[5-amino-1-(5-phospho-beta-D-ribosyl)imidazole-4-carboxamido]succinate = 5-amino-1-(5-phospho-beta-D-ribosyl)imidazole-4-carboxamide + fumarate. It participates in purine metabolism; AMP biosynthesis via de novo pathway; AMP from IMP: step 2/2. It functions in the pathway purine metabolism; IMP biosynthesis via de novo pathway; 5-amino-1-(5-phospho-D-ribosyl)imidazole-4-carboxamide from 5-amino-1-(5-phospho-D-ribosyl)imidazole-4-carboxylate: step 2/2. Catalyzes two reactions in de novo purine nucleotide biosynthesis. Catalyzes the breakdown of 5-aminoimidazole- (N-succinylocarboxamide) ribotide (SAICAR or 2-[5-amino-1-(5-phospho-beta-D-ribosyl)imidazole-4-carboxamido]succinate) to 5-aminoimidazole-4-carboxamide ribotide (AICAR or 5-amino-1-(5-phospho-beta-D-ribosyl)imidazole-4-carboxamide) and fumarate, and of adenylosuccinate (ADS or N(6)-(1,2-dicarboxyethyl)-AMP) to adenosine monophosphate (AMP) and fumarate. In Streptococcus mutans serotype c (strain ATCC 700610 / UA159), this protein is Adenylosuccinate lyase (purB).